The primary structure comprises 266 residues: Putative pyruvate, phosphate dikinase regulatory protein (266 aa).

149-156 (GVSRTSKT) contributes to the ADP binding site.

Belongs to the pyruvate, phosphate/water dikinase regulatory protein family. PDRP subfamily.

The catalysed reaction is N(tele)-phospho-L-histidyl/L-threonyl-[pyruvate, phosphate dikinase] + ADP = N(tele)-phospho-L-histidyl/O-phospho-L-threonyl-[pyruvate, phosphate dikinase] + AMP + H(+). It carries out the reaction N(tele)-phospho-L-histidyl/O-phospho-L-threonyl-[pyruvate, phosphate dikinase] + phosphate + H(+) = N(tele)-phospho-L-histidyl/L-threonyl-[pyruvate, phosphate dikinase] + diphosphate. Functionally, bifunctional serine/threonine kinase and phosphorylase involved in the regulation of the pyruvate, phosphate dikinase (PPDK) by catalyzing its phosphorylation/dephosphorylation. This Geobacillus thermodenitrificans (strain NG80-2) protein is Putative pyruvate, phosphate dikinase regulatory protein.